Here is a 502-residue protein sequence, read N- to C-terminus: Maturase K (502 aa).

Belongs to the intron maturase 2 family. MatK subfamily.

Its subcellular location is the plastid. It localises to the chloroplast. Its function is as follows. Usually encoded in the trnK tRNA gene intron. Probably assists in splicing its own and other chloroplast group II introns. This chain is Maturase K, found in Ipomoea purpurea (Common morning glory).